A 428-amino-acid polypeptide reads, in one-letter code: D-amino acid dehydrogenase (428 aa).

3 to 17 (VVVLGSGVVGVTSAY) lines the FAD pocket.

This sequence belongs to the DadA oxidoreductase family. It depends on FAD as a cofactor.

It carries out the reaction a D-alpha-amino acid + A + H2O = a 2-oxocarboxylate + AH2 + NH4(+). It functions in the pathway amino-acid degradation; D-alanine degradation; NH(3) and pyruvate from D-alanine: step 1/1. Oxidative deamination of D-amino acids. The protein is D-amino acid dehydrogenase of Paraburkholderia phymatum (strain DSM 17167 / CIP 108236 / LMG 21445 / STM815) (Burkholderia phymatum).